A 288-amino-acid polypeptide reads, in one-letter code: Homoserine kinase (288 aa).

ATP is bound at residue 78–88; the sequence is PLARGLGSSSS.

This sequence belongs to the GHMP kinase family. Homoserine kinase subfamily.

Its subcellular location is the cytoplasm. The catalysed reaction is L-homoserine + ATP = O-phospho-L-homoserine + ADP + H(+). Its pathway is amino-acid biosynthesis; L-threonine biosynthesis; L-threonine from L-aspartate: step 4/5. Catalyzes the ATP-dependent phosphorylation of L-homoserine to L-homoserine phosphate. The chain is Homoserine kinase from Streptococcus mutans serotype c (strain ATCC 700610 / UA159).